We begin with the raw amino-acid sequence, 199 residues long: Small ribosomal subunit protein uS4 (199 aa).

An S4 RNA-binding domain is found at 91-153 (ARLDNVVYRM…SKNFVVIKEA (63 aa)).

The protein belongs to the universal ribosomal protein uS4 family. As to quaternary structure, part of the 30S ribosomal subunit. Contacts protein S5. The interaction surface between S4 and S5 is involved in control of translational fidelity.

In terms of biological role, one of the primary rRNA binding proteins, it binds directly to 16S rRNA where it nucleates assembly of the body of the 30S subunit. Functionally, with S5 and S12 plays an important role in translational accuracy. The protein is Small ribosomal subunit protein uS4 of Exiguobacterium sibiricum (strain DSM 17290 / CCUG 55495 / CIP 109462 / JCM 13490 / 255-15).